The chain runs to 354 residues: Rhodopsin (354 aa).

Residues 1-36 (MNGTEGPMFYVPMSNATGVVKSPYDYPQYYLVAPWA) are Extracellular-facing. 2 N-linked (GlcNAc...) asparagine glycosylation sites follow: Asn2 and Asn15. The chain crosses the membrane as a helical span at residues 37–61 (YGCLAAYMFFLIITGFPINFLTLYV). Topologically, residues 62-73 (TIEHKKLRTPLN) are cytoplasmic. A helical membrane pass occupies residues 74 to 96 (YILLNLAISDLFMVFGGFTTTMY). At 97 to 110 (TSLHGYFVFGRIGC) the chain is on the extracellular side. A disulfide bridge connects residues Cys110 and Cys187. Residues 111 to 133 (NLEGFFATLGGEMGLWSLVVLAF) form a helical membrane-spanning segment. The 'Ionic lock' involved in activated form stabilization signature appears at 134–136 (ERW). Residues 134–152 (ERWMVVCKPVSNFRFGENH) lie on the Cytoplasmic side of the membrane. A helical membrane pass occupies residues 153–173 (AIMGVVFTWFMACTCAVPPLV). Residues 174 to 202 (GWSRYIPEGMQCSCGVDYYTRAPGYNNES) lie on the Extracellular side of the membrane. The chain crosses the membrane as a helical span at residues 203-224 (FVIYMFLVHFIIPLIVIFFCYG). Topologically, residues 225–252 (RLVCTVKDAAAQQQESETTQRAEREVTR) are cytoplasmic. A helical transmembrane segment spans residues 253–274 (MVVIMVIGFLICWIPYASVAWY). Topologically, residues 275–286 (IFTHQGSEFGPV) are extracellular. A helical transmembrane segment spans residues 287-308 (FMTVPAFFAKSAAVYNPCIYIC). The residue at position 296 (Lys296) is an N6-(retinylidene)lysine. The Cytoplasmic segment spans residues 309–354 (MNKQFRHCMITTLCCGKNPFEEEEGASTTASKTEASSVSSSSVSPA). Residues Cys322 and Cys323 are each lipidated (S-palmitoyl cysteine). Residues 333-354 (GASTTASKTEASSVSSSSVSPA) form a disordered region. Residues 334 to 354 (ASTTASKTEASSVSSSSVSPA) are compositionally biased toward low complexity.

It belongs to the G-protein coupled receptor 1 family. Opsin subfamily. Phosphorylated on some or all of the serine and threonine residues present in the C-terminal region. Post-translationally, contains one covalently linked retinal chromophore.

The protein localises to the membrane. Its subcellular location is the cell projection. It localises to the cilium. It is found in the photoreceptor outer segment. Functionally, photoreceptor required for image-forming vision at low light intensity. While most salt water fish species use retinal as chromophore, most freshwater fish use 3-dehydroretinal, or a mixture of retinal and 3-dehydroretinal. Light-induced isomerization of 11-cis to all-trans retinal triggers a conformational change that activates signaling via G-proteins. Subsequent receptor phosphorylation mediates displacement of the bound G-protein alpha subunit by arrestin and terminates signaling. The sequence is that of Rhodopsin (rho) from Cyprinus carpio (Common carp).